Here is a 420-residue protein sequence, read N- to C-terminus: Glycogen synthase kinase-3 beta (420 aa).

Over residues 1-24 (MSGRPRTTSFAESCKPVQQPSSFG) the composition is skewed to polar residues. A disordered region spans residues 1–50 (MSGRPRTTSFAESCKPVQQPSSFGSMKVSRDKDGSKVTTVVATPGQGPDR). Residues 56–340 (YTDTKVIGNG…PLDACAHSFF (285 aa)) enclose the Protein kinase domain. ATP contacts are provided by residues 62–70 (IGNGSFGVV) and Lys-85. The active-site Proton acceptor is Asp-181. The tract at residues 384–420 (NQAAVSTTSNTTSTSDSNTGERGSTNNAASASASNSS) is disordered. Composition is skewed to low complexity over residues 389–401 (STTSNTTSTSDSN) and 409–420 (NNAASASASNSS).

It belongs to the protein kinase superfamily. CMGC Ser/Thr protein kinase family. GSK-3 subfamily. In terms of processing, phosphorylated. Activated by phosphorylation at Tyr-216.

The protein localises to the cytoplasm. Its subcellular location is the nucleus. It is found in the cell membrane. The catalysed reaction is L-seryl-[tau protein] + ATP = O-phospho-L-seryl-[tau protein] + ADP + H(+). It catalyses the reaction L-threonyl-[tau protein] + ATP = O-phospho-L-threonyl-[tau protein] + ADP + H(+). Its function is as follows. Plays a role in the organization of the formation of the main body axis of developing embryo. Acts as an inhibitor of differentiation of primary neurons. Inhibits the ability of ectopically expressed NEUROD1 and other bHLH factors to promote early retinal cell differentiation. May participate in the Wnt signaling pathway. May regulate the circadian clock via phosphorylation of the major clock components. The sequence is that of Glycogen synthase kinase-3 beta (gsk3b) from Xenopus laevis (African clawed frog).